The sequence spans 358 residues: MEPIGARLSLEAPGPAPFREAPPAEELPAPVVPCVQGGGDGGGASETPSPDAQLGDRPLSPKEEAAPQEQEELLECRRRCRARSFSLPADPILQAAKFLQQQQQQAVALGGEGAEDAQLGPGGCCAKCKKRVQFADTLGLSLASVKHFSEAEEPQVPPAVLSRLRSFPMRAEDLEQLGGLLAAAAVAAPLSAPPSRLRPLFQLPGPSAAAERLQRQRVCLERVQCSTASGAEVKGSGRVLSCPGPRAVTVRYTFTEWRSFLDVPAELQPEPLEPQQPEAPSGASEPGSGDAKKEPGAECFHFSLCLPPGLQPEDEEDADERGVAVHFAVCYRCAQGEYWDNNAGANYTLRYARPADAL.

A disordered region spans residues 1-71 (MEPIGARLSL…KEEAAPQEQE (71 aa)). Low complexity predominate over residues 11 to 29 (EAPGPAPFREAPPAEELPA). At Ser-86 the chain carries Phosphoserine. In terms of domain architecture, CBM21 spans 210 to 350 (AERLQRQRVC…NNAGANYTLR (141 aa)). The segment covering 270 to 280 (EPLEPQQPEAP) has biased composition (low complexity). The disordered stretch occupies residues 270–295 (EPLEPQQPEAPSGASEPGSGDAKKEP).

Glycogen-targeting subunit for protein phosphatase 1 (PP1). Involved in the regulation of hepatic glycogenesis in a manner coupled to the fasting-feeding cycle and distinct from other glycogen-targeting subunits. This is Protein phosphatase 1 regulatory subunit 3G (PPP1R3G) from Homo sapiens (Human).